Reading from the N-terminus, the 227-residue chain is Ribose-5-phosphate isomerase A (227 aa).

Residues 26–29 (TGST), 82–85 (DGAD), and 95–98 (KGGG) contribute to the substrate site. Glu104 functions as the Proton acceptor in the catalytic mechanism. Lys122 lines the substrate pocket.

It belongs to the ribose 5-phosphate isomerase family. In terms of assembly, homodimer.

It carries out the reaction aldehydo-D-ribose 5-phosphate = D-ribulose 5-phosphate. The protein operates within carbohydrate degradation; pentose phosphate pathway; D-ribose 5-phosphate from D-ribulose 5-phosphate (non-oxidative stage): step 1/1. Functionally, catalyzes the reversible conversion of ribose-5-phosphate to ribulose 5-phosphate. The chain is Ribose-5-phosphate isomerase A from Streptococcus pyogenes serotype M28 (strain MGAS6180).